A 268-amino-acid polypeptide reads, in one-letter code: WUSCHEL-related homeobox 12 (268 aa).

Residues 1–16 (MNQEGASHSPSSTSTE) are compositionally biased toward polar residues. Disordered stretches follow at residues 1-22 (MNQE…RARW) and 173-198 (SDHN…QNSN). The homeobox; WUS-type DNA-binding region spans 17–81 (PVRARWSPKP…NRRSRSRRRH (65 aa)).

This sequence belongs to the WUS homeobox family.

It localises to the nucleus. Its function is as follows. Transcription factor which may be involved in developmental processes. This Arabidopsis thaliana (Mouse-ear cress) protein is WUSCHEL-related homeobox 12 (WOX12).